The primary structure comprises 156 residues: 3-hydroxyacyl-[acyl-carrier-protein] dehydratase FabZ (156 aa).

Histidine 62 is an active-site residue.

The protein belongs to the thioester dehydratase family. FabZ subfamily.

The protein resides in the cytoplasm. It carries out the reaction a (3R)-hydroxyacyl-[ACP] = a (2E)-enoyl-[ACP] + H2O. Its function is as follows. Involved in unsaturated fatty acids biosynthesis. Catalyzes the dehydration of short chain beta-hydroxyacyl-ACPs and long chain saturated and unsaturated beta-hydroxyacyl-ACPs. This chain is 3-hydroxyacyl-[acyl-carrier-protein] dehydratase FabZ, found in Parasynechococcus marenigrum (strain WH8102).